Consider the following 409-residue polypeptide: Pleckstrin homology domain-containing family O member 1 (409 aa).

The disordered stretch occupies residues 1–24 (MMKKNNSAKRGPQDGNQQPAPPEK). The PH domain maps to 21–132 (PPEKVGWVRK…WINALNSAIT (112 aa)). The interaction with capping proteins (CPs) stretch occupies residues 133–193 (RAKNRILDEV…MLTLDLIQEE (61 aa)). Residues 136 to 308 (NRILDEVTVE…LPNPGQLSRI (173 aa)) form an interaction with ATM, CKIP, IFP35 and NMI region. Residues 218-267 (LAGSRRRADSDRIQPSADRASSLSRPWEKTDKGATYTPQAPKKLTPTEKG) are disordered. Serine 227 and serine 271 each carry phosphoserine. A negative regulator of AP-1 activity region spans residues 308–409 (IQDLVARKLE…PHSQYRKSLM (102 aa)). 2 disordered regions span residues 325 to 350 (EVQGLGDGKRKAKDPPRSPPDSESEQ) and 390 to 409 (TPDSHLRQTTPHSQYRKSLM). The segment covering 331 to 340 (DGKRKAKDPP) has biased composition (basic and acidic residues). Serine 342 is subject to Phosphoserine. Residues 390–402 (TPDSHLRQTTPHS) show a composition bias toward polar residues.

As to quaternary structure, heterodimer or homodimer. Interacts with CK2 and actin capping subunits (capping protein CP-alpha and CP-beta). CKIP1 and CK2 together inhibit the activity of actin capping protein at the barbed ends of actin filaments. Interacts with ATM, IFP35, JUN, JUND, NMI and PI3K. Interacts with AKT1, AKT2 and AKT3 (each isozyme of PKB), PtdIns(3,5)P2, PtdIns(4,5)P2 and PtdIns(3,4,5)P2. In terms of processing, C-terminal fragments could be released during apoptosis via caspase-3-dependent cleavage. As to expression, abundantly expressed in skeletal muscle and heart, moderately in kidney, liver, brain and placenta and sparingly in the pancreas and lung. Easily detectable in cell lines such as MOLT-4, HEK293 and Jurkat.

It is found in the cell membrane. It localises to the nucleus. The protein localises to the cytoplasm. Its function is as follows. Plays a role in the regulation of the actin cytoskeleton through its interactions with actin capping protein (CP). May function to target CK2 to the plasma membrane thereby serving as an adapter to facilitate the phosphorylation of CP by protein kinase 2 (CK2). Appears to target ATM to the plasma membrane. Appears to also inhibit tumor cell growth by inhibiting AKT-mediated cell-survival. Also implicated in PI3K-regulated muscle differentiation, the regulation of AP-1 activity (plasma membrane bound AP-1 regulator that translocates to the nucleus) and the promotion of apoptosis induced by tumor necrosis factor TNF. When bound to PKB, it inhibits it probably by decreasing PKB level of phosphorylation. This Homo sapiens (Human) protein is Pleckstrin homology domain-containing family O member 1 (PLEKHO1).